A 224-amino-acid polypeptide reads, in one-letter code: Polyadenylate-binding protein 2 (224 aa).

The span at 1–36 shows a compositional bias: acidic residues; it reads MADEDITLNEDQLLESLEETNGEQETEIATEVEEEG. Residues 1–40 are disordered; the sequence is MADEDITLNEDQLLESLEETNGEQETEIATEVEEEGSMQI. Positions 9–74 form a coiled coil; it reads NEDQLLESLE…QSEVDKQMAG (66 aa). Residues 96–173 enclose the RRM domain; it reads RSVYVGNVDY…RQIKVMSKRT (78 aa).

As to quaternary structure, interacts with ZC3H3. As to expression, expressed ubiquitously in all transcriptionally active cells.

Its subcellular location is the nucleus. The protein resides in the cytoplasm. In terms of biological role, involved in the 3'-end formation of mRNA precursors (pre-mRNA) by the addition of a poly(A) tail of 200-250 nt to the upstream cleavage product. Stimulates poly(A) polymerase (PAPOLA) conferring processivity on the poly(A) tail elongation reaction and also controls the poly(A) tail length. Increases the affinity of poly(A) polymerase for RNA. Binds to poly(A) and to poly(G) with high affinity. May protect the poly(A) tail from degradation. Plays a role in the positive regulation of alpha-1,3 fucosylation, possibly by cooperating with swm which regulates nuclear export of fucosyltransferase FucTA. Involved in germline stem cell transit amplification, differentiation and mitosis-to-meiosis transition. In Drosophila melanogaster (Fruit fly), this protein is Polyadenylate-binding protein 2.